The primary structure comprises 410 residues: MAASNQSEVNIGMVGHVDHGKTSLTRKLTGVWTDTHSEELKRGISIRLGYADCEIKKCETCDEPECYTVDKKCDACGGKVDTLRKISFVDAPGHETLMATMLSGASLMDGAILVIAASEECPQPQTKEHLMALDALGVEHILIVQNKIDLVTEEAAIENYNQIKEFTKGTVAENAPIIPVSAHHGANLDVLLKAIQEFIPTPKRDETLTPKLYVARSFDVNKPGSEIKDLKGGVIGGSIIQGALKVGDDLEIRPGIKVTEGNKTHWVPIITKIISLGVGNKKLKTASPGGLIGVGTELDPNLTKSDALSGSLAGLPGTLPETLEKMVIKPQLLERVVGSQDELIIEPLKTNEVLMLNVGTSTTVGVTVSARADKAEIKLKLPVCADKGDRVAISRKIGSRWRLIGYGIIL.

A tr-type G domain is found at 6-203 (QSEVNIGMVG…AIQEFIPTPK (198 aa)). Residues 15 to 22 (GHVDHGKT) are G1. Mg(2+) is bound by residues aspartate 18, threonine 22, glycine 43, and serine 45. 18-23 (DHGKTS) contacts GTP. The segment at 43–47 (GISIR) is G2. Cysteine 58, cysteine 61, cysteine 73, and cysteine 76 together coordinate Zn(2+). A G3 region spans residues 90-93 (DAPG). GTP-binding positions include 146–149 (NKID) and 181–183 (SAH). The segment at 146 to 149 (NKID) is G4. The G5 stretch occupies residues 181 to 183 (SAH).

Belongs to the TRAFAC class translation factor GTPase superfamily. Classic translation factor GTPase family. EIF2G subfamily. In terms of assembly, heterotrimer composed of an alpha, a beta and a gamma chain. The cofactor is Mg(2+).

It catalyses the reaction GTP + H2O = GDP + phosphate + H(+). Its function is as follows. eIF-2 functions in the early steps of protein synthesis by forming a ternary complex with GTP and initiator tRNA. The sequence is that of Translation initiation factor 2 subunit gamma from Methanococcus maripaludis (strain C6 / ATCC BAA-1332).